A 187-amino-acid chain; its full sequence is MQDKNNLCWLDMEMTGLNPETDRIIEVAMIITDSDLNVLAQSEVYAIHQSDELLDNMDEWNTATHGRTGLTQRVRESSHTEAEVEQKLLDFMSEWVPRRATPMCGNSIHQDRRFMVKYMPKLENYFHYRNLDVSTLKELAKRWNPPVAKSVVKRGSHKALDDILESIEEMRHYREHFLISAPRAEAQ.

An Exonuclease domain is found at 7 to 170 (LCWLDMEMTG…DDILESIEEM (164 aa)). Residue Y128 is part of the active site.

Belongs to the oligoribonuclease family.

It is found in the cytoplasm. In terms of biological role, 3'-to-5' exoribonuclease specific for small oligoribonucleotides. In Neisseria meningitidis serogroup A / serotype 4A (strain DSM 15465 / Z2491), this protein is Oligoribonuclease.